Here is a 125-residue protein sequence, read N- to C-terminus: Large ribosomal subunit protein bL19 (125 aa).

This sequence belongs to the bacterial ribosomal protein bL19 family.

Functionally, this protein is located at the 30S-50S ribosomal subunit interface and may play a role in the structure and function of the aminoacyl-tRNA binding site. This Ehrlichia chaffeensis (strain ATCC CRL-10679 / Arkansas) protein is Large ribosomal subunit protein bL19.